The chain runs to 2034 residues: Sperm vesicle fusion protein fer-1 (2034 aa).

The tract at residues 1-80 (MTVKEKLLKV…GGSDIELLPD (80 aa)) is disordered. At 1–1998 (MTVKEKLLKV…CIKYFWHYYG (1998 aa)) the chain is on the cytoplasmic side. A compositionally biased stretch (acidic residues) spans 66 to 79 (ELSDDGGSDIELLP). 4 C2 domains span residues 229–367 (RIDE…YLPT), 954–1082 (DSED…PQWF), 1120–1246 (YKER…KSDH), and 1363–1484 (KKGK…ATGG). A disordered region spans residues 1563–1619 (QKAGKENFSDGSDQQNEDVSDGSWDEEDLEREKEKLKWEKHRSKGKPLKKVTTEKAE). The segment covering 1577-1591 (QNEDVSDGSWDEEDL) has biased composition (acidic residues). Residues 1600–1611 (WEKHRSKGKPLK) show a composition bias toward basic residues. The C2 5 domain maps to 1684-1831 (EYGAIPAPFN…EGIGSPSDVG (148 aa)). Residues 1953 to 1972 (QEPAGKKRSEPNHSPFLEKP) form a disordered region. A helical transmembrane segment spans residues 1999–2019 (LQILLWLIIIVILILTIFVLL). Topologically, residues 2020–2034 (HTWPTILAEIIKAIF) are extracellular.

It belongs to the ferlin family. In terms of tissue distribution, exclusively expressed in the testis.

It is found in the membrane. Functionally, required for the fusion of the membranous organelles (MOs) with the plasma membrane, a process essential in spermiogenesis. The chain is Sperm vesicle fusion protein fer-1 (fer-1) from Caenorhabditis elegans.